A 491-amino-acid polypeptide reads, in one-letter code: Protein nucleotidyltransferase YdiU (491 aa).

The ATP site is built by Gly-88, Gly-90, Arg-91, Lys-111, Asp-123, Gly-124, Arg-174, and Arg-181. Asp-250 acts as the Proton acceptor in catalysis. Mg(2+) is bound by residues Asn-251 and Asp-260. Asp-260 serves as a coordination point for ATP. Residues 466-484 (DDQPDRADYAEPPQPEERV) are compositionally biased toward basic and acidic residues. The tract at residues 466 to 491 (DDQPDRADYAEPPQPEERVLQTFCGT) is disordered.

The protein belongs to the SELO family. Mg(2+) serves as cofactor. Mn(2+) is required as a cofactor.

It catalyses the reaction L-seryl-[protein] + ATP = 3-O-(5'-adenylyl)-L-seryl-[protein] + diphosphate. The catalysed reaction is L-threonyl-[protein] + ATP = 3-O-(5'-adenylyl)-L-threonyl-[protein] + diphosphate. The enzyme catalyses L-tyrosyl-[protein] + ATP = O-(5'-adenylyl)-L-tyrosyl-[protein] + diphosphate. It carries out the reaction L-histidyl-[protein] + UTP = N(tele)-(5'-uridylyl)-L-histidyl-[protein] + diphosphate. It catalyses the reaction L-seryl-[protein] + UTP = O-(5'-uridylyl)-L-seryl-[protein] + diphosphate. The catalysed reaction is L-tyrosyl-[protein] + UTP = O-(5'-uridylyl)-L-tyrosyl-[protein] + diphosphate. Functionally, nucleotidyltransferase involved in the post-translational modification of proteins. It can catalyze the addition of adenosine monophosphate (AMP) or uridine monophosphate (UMP) to a protein, resulting in modifications known as AMPylation and UMPylation. This Bradyrhizobium sp. (strain ORS 278) protein is Protein nucleotidyltransferase YdiU.